The chain runs to 254 residues: HLA class II histocompatibility antigen, DR alpha chain (254 aa).

An N-terminal signal peptide occupies residues 1–25; the sequence is MAISGVPVLGFFIIAVLMSAQESWA. The interval 26 to 109 is alpha-1; sequence IKEEHVIIQA…KRSNYTPITN (84 aa). Residues 26–216 are Extracellular-facing; the sequence is IKEEHVIIQA…APSPLPETTE (191 aa). 2 N-linked (GlcNAc...) asparagine glycosylation sites follow: N103 and N143. An alpha-2 region spans residues 110-203; sequence VPPEVTVLTN…GLDEPLLKHW (94 aa). Residues 112–204 form the Ig-like C1-type domain; the sequence is PEVTVLTNSP…LDEPLLKHWE (93 aa). A disulfide bridge connects residues C132 and C188. The segment at 204–216 is connecting peptide; it reads EFDAPSPLPETTE. The chain crosses the membrane as a helical span at residues 217 to 239; the sequence is NVVCALGLTVGLVGIIIGTIFII. Residues 240-254 are Cytoplasmic-facing; that stretch reads KGLRKSNAAERRGPL. K244 participates in a covalent cross-link: Glycyl lysine isopeptide (Lys-Gly) (interchain with G-Cter in ubiquitin).

It belongs to the MHC class II family. Heterotrimer that consists of an alpha chain HLA-DRA, a beta chain HLA-DRB and a peptide (peptide-MHCII). Newly synthesized alpha and beta chains forms a heterodimer (MHCII) that associates with the CD74/invariant chain (Ii) in the endoplasmic reticulum (ER). Ii is a trimer composed of three subunits and each subunit interacts with one MHCII dimer, blocking the peptide-binding cleft. As a result, MHCII molecules cannot bind peptides present in the ER. The complex of MHCII and CD74/Ii is transported in vesicles from ER to Golgi to lysosomes, where it encounters antigenic peptides generated via proteolysis of endocytosed antigens. MHCII dimers are dissociated from CD74/Ii by the combined action of proteolysis and HLA-DM. Lysosomal enzymes such as cathepsin, degrade CD74/Ii leaving a 24 amino acid remnant called class II-associated Ii or CLIP. Interacts (via the peptide binding cleft) with CLIP; this interaction inhibits antigen peptide binding before entry in the endosomal compartment. The displacement of CLIP and replacement by a high affinity peptide in lysosomes is performed by HLA-DM heterodimer. HLA-DM catalyzes CLIP dissociation from MHCII, stabilizes empty MHCII and mediates the selection of high affinity peptides. Interacts with HLA-DM heterodimer; this interaction is direct. Interacts (via alpha-1 domain) with TCR (via CDRs). Interacts (via alpha-2 domain) with CD4 (via Ig-like V-type domain); this interaction increases the affinity of TCR for peptide-MHCII. In terms of assembly, (Microbial infection) Interacts with Epstein-Barr virus BZLF2/gp42. As to quaternary structure, (Microbial infection) Interacts with Staphylococcus aureus enterotoxin A/entA, enterotoxin B/entB, enterotoxin C1/entC1, enterotoxin D/entD, and enterotoxin H/entH. Ubiquitinated by MARCHF1 or MARCHF8 at Lys-244 leading to down-regulation of MHCII. When associated with ubiquitination of the beta chain at 'Lys-254', the down-regulation of MHCII may be highly effective. As to expression, expressed in professional APCs: macrophages, dendritic cells and B cells (at protein level). Expressed in thymic epithelial cells (at protein level).

It is found in the cell membrane. Its subcellular location is the endoplasmic reticulum membrane. It localises to the early endosome membrane. The protein resides in the late endosome membrane. The protein localises to the lysosome membrane. It is found in the autolysosome membrane. An alpha chain of antigen-presenting major histocompatibility complex class II (MHCII) molecule. In complex with the beta chain HLA-DRB, displays antigenic peptides on professional antigen presenting cells (APCs) for recognition by alpha-beta T cell receptor (TCR) on HLA-DR-restricted CD4-positive T cells. This guides antigen-specific T-helper effector functions, both antibody-mediated immune response and macrophage activation, to ultimately eliminate the infectious agents and transformed cells. Typically presents extracellular peptide antigens of 10 to 30 amino acids that arise from proteolysis of endocytosed antigens in lysosomes. In the tumor microenvironment, presents antigenic peptides that are primarily generated in tumor-resident APCs likely via phagocytosis of apoptotic tumor cells or macropinocytosis of secreted tumor proteins. Presents peptides derived from intracellular proteins that are trapped in autolysosomes after macroautophagy, a mechanism especially relevant for T cell selection in the thymus and central immune tolerance. The selection of the immunodominant epitopes follows two processing modes: 'bind first, cut/trim later' for pathogen-derived antigenic peptides and 'cut first, bind later' for autoantigens/self-peptides. The anchor residue at position 1 of the peptide N-terminus, usually a large hydrophobic residue, is essential for high affinity interaction with MHCII molecules. The sequence is that of HLA class II histocompatibility antigen, DR alpha chain (HLA-DRA) from Homo sapiens (Human).